Reading from the N-terminus, the 106-residue chain is MYAVLVTGGKQYRVAQGETLRVEKLEVEAGNEIKFDTILMLGDSDGIKLGDALKGASVTAKVVAHGRADKVRIIKFRRRKHHMKRQGHRQYYTEIEITGIAGGDKK.

It belongs to the bacterial ribosomal protein bL21 family. Part of the 50S ribosomal subunit. Contacts protein L20.

In terms of biological role, this protein binds to 23S rRNA in the presence of protein L20. The polypeptide is Large ribosomal subunit protein bL21 (Xanthomonas campestris pv. campestris (strain ATCC 33913 / DSM 3586 / NCPPB 528 / LMG 568 / P 25)).